Here is a 136-residue protein sequence, read N- to C-terminus: Ubiquinol-cytochrome c reductase complex assembly factor 2 (136 aa).

The transit peptide at 1 to 13 (MAALRYRRFLKLC) directs the protein to the mitochondrion.

As to quaternary structure, interacts with UQCC1. Forms a complex, named COMB/coordinator of mitochondrial CYTB biogenesis, composed of UQCC1, UQCC2, UQCC4, UQCC5 and UQCC6; stabilizes nascent cytochrome b/MT-CYB and promotes its membrane insertion. Forms a complex, named COMA, composed of UQCC1, UQCC2 and UQCC4; activates MT-CYB translation. Forms a complex, named COMC, composed of UQCC1, UQCC2; UQCC3 and UQCC4; mediates MT-CYB hemylation and association with the first nuclear-encoded CIII subunit UQCRQ. As to expression, widely expressed with highest levels in brain, liver, kidney, heart, skeletal muscle, thymus, testis and pancreas (at protein level).

Its subcellular location is the mitochondrion matrix. It is found in the mitochondrion nucleoid. The protein resides in the mitochondrion. It localises to the mitochondrion intermembrane space. The protein localises to the mitochondrion inner membrane. Functionally, required for the assembly of the ubiquinol-cytochrome c reductase complex (mitochondrial respiratory chain complex III or cytochrome b-c1 complex). Plays a role in the modulation of respiratory chain activities such as oxygen consumption and ATP production and via its modulation of the respiratory chain activity can regulate skeletal muscle differentiation and insulin secretion by pancreatic beta-cells. Involved in cytochrome b translation and/or stability. The chain is Ubiquinol-cytochrome c reductase complex assembly factor 2 (Uqcc2) from Mus musculus (Mouse).